The chain runs to 463 residues: Probable mannan endo-1,4-beta-mannosidase F (463 aa).

Residues methionine 1–alanine 18 form the signal peptide. The 36-residue stretch at glutamine 19–valine 54 folds into the CBM1 domain. The segment at alanine 57–isoleucine 78 is disordered. Low complexity predominate over residues serine 59–serine 77. Residues serine 75 to serine 118 are ser-rich linker. Residue asparagine 87 is glycosylated (N-linked (GlcNAc...) asparagine). Over residues serine 93–serine 118 the composition is skewed to low complexity. Positions serine 93–lysine 121 are disordered. Residues phenylalanine 119–asparagine 463 are catalytic. Substrate contacts are provided by tryptophan 171 and asparagine 285. The Proton donor role is filled by glutamate 286. Position 361 (tyrosine 361) interacts with substrate. Glutamate 395 (nucleophile) is an active-site residue. Residue tryptophan 424 participates in substrate binding.

The protein belongs to the glycosyl hydrolase 5 (cellulase A) family.

The protein localises to the secreted. It carries out the reaction Random hydrolysis of (1-&gt;4)-beta-D-mannosidic linkages in mannans, galactomannans and glucomannans.. Functionally, endo-1,4-mannanase, a crucial enzyme for depolymerization of seed galactomannans and wood galactoglucomannans. The chain is Probable mannan endo-1,4-beta-mannosidase F (manF) from Aspergillus flavus (strain ATCC 200026 / FGSC A1120 / IAM 13836 / NRRL 3357 / JCM 12722 / SRRC 167).